We begin with the raw amino-acid sequence, 376 residues long: Germination-specific cysteine protease 1 (376 aa).

The first 22 residues, 1-22 (MAPSTKVLSLLLLYVVVSLASG), serve as a signal peptide directing secretion. Residues 23 to 144 (DESIINDHLQ…KYSAAVNGKE (122 aa)) constitute a propeptide, activation peptide. Asparagine 93 carries an N-linked (GlcNAc...) asparagine glycan. Intrachain disulfides connect cysteine 166/cysteine 208, cysteine 200/cysteine 241, and cysteine 299/cysteine 351. Cysteine 169 is an active-site residue. Catalysis depends on residues histidine 305 and asparagine 325.

Belongs to the peptidase C1 family.

Its function is as follows. Probable thiol protease. The polypeptide is Germination-specific cysteine protease 1 (Arabidopsis thaliana (Mouse-ear cress)).